The following is a 148-amino-acid chain: CLKRLQPGEMSLQLLLSGCRLRLEQETGVLGRFADLTRKIIQPDSDETVRFSDGIFIRGLIPQRCNTRFSRLAILNCYYTYKGSLTTPICSENVTWLIVKPRLPATNNMMRKFRRLETPAGKNPPLMCDNFRPVQPLNGRTVFEVHRI.

The 146-residue stretch at 1 to 146 (CLKRLQPGEM…LNGRTVFEVH (146 aa)) folds into the Alpha-carbonic anhydrase domain.

It belongs to the alpha-carbonic anhydrase family. It depends on Zn(2+) as a cofactor. Component of the acid-insoluble organic matrix of the aragonitic skeleton (at protein level).

Its subcellular location is the secreted. It catalyses the reaction hydrogencarbonate + H(+) = CO2 + H2O. In terms of biological role, reversible hydration of carbon dioxide. This is Putative carbonic anhydrase from Acropora millepora (Staghorn coral).